The primary structure comprises 275 residues: Phosphonoacetaldehyde hydrolase (275 aa).

Residue Asp15 is the Nucleophile of the active site. Mg(2+) is bound by residues Asp15 and Ala17. Lys56 functions as the Schiff-base intermediate with substrate in the catalytic mechanism. Asp189 serves as a coordination point for Mg(2+).

The protein belongs to the HAD-like hydrolase superfamily. PhnX family. Homodimer. The cofactor is Mg(2+).

It catalyses the reaction phosphonoacetaldehyde + H2O = acetaldehyde + phosphate + H(+). Its function is as follows. Involved in phosphonate degradation. The protein is Phosphonoacetaldehyde hydrolase of Pseudomonas fluorescens (strain Pf0-1).